A 460-amino-acid chain; its full sequence is Cysteine--tRNA ligase (460 aa).

Position 27 (C27) interacts with Zn(2+). Positions 29–39 (PTVYDDAHLGH) match the 'HIGH' region motif. The Zn(2+) site is built by C202, H227, and E231. Positions 259–263 (KMSKS) match the 'KMSKS' region motif. ATP is bound at residue K262.

It belongs to the class-I aminoacyl-tRNA synthetase family. As to quaternary structure, monomer. Zn(2+) serves as cofactor.

It is found in the cytoplasm. It carries out the reaction tRNA(Cys) + L-cysteine + ATP = L-cysteinyl-tRNA(Cys) + AMP + diphosphate. In Campylobacter lari (strain RM2100 / D67 / ATCC BAA-1060), this protein is Cysteine--tRNA ligase.